We begin with the raw amino-acid sequence, 171 residues long: ATP synthase subunit b (171 aa).

A helical membrane pass occupies residues 19–39; that stretch reads VGVGLILFIAIVIWAKAPAMI.

The protein belongs to the ATPase B chain family. As to quaternary structure, F-type ATPases have 2 components, F(1) - the catalytic core - and F(0) - the membrane proton channel. F(1) has five subunits: alpha(3), beta(3), gamma(1), delta(1), epsilon(1). F(0) has three main subunits: a(1), b(2) and c(10-14). The alpha and beta chains form an alternating ring which encloses part of the gamma chain. F(1) is attached to F(0) by a central stalk formed by the gamma and epsilon chains, while a peripheral stalk is formed by the delta and b chains.

The protein localises to the cell inner membrane. Functionally, f(1)F(0) ATP synthase produces ATP from ADP in the presence of a proton or sodium gradient. F-type ATPases consist of two structural domains, F(1) containing the extramembraneous catalytic core and F(0) containing the membrane proton channel, linked together by a central stalk and a peripheral stalk. During catalysis, ATP synthesis in the catalytic domain of F(1) is coupled via a rotary mechanism of the central stalk subunits to proton translocation. Component of the F(0) channel, it forms part of the peripheral stalk, linking F(1) to F(0). The sequence is that of ATP synthase subunit b from Caulobacter sp. (strain K31).